A 421-amino-acid polypeptide reads, in one-letter code: CaM kinase-like vesicle-associated protein (421 aa).

Residues 24–284 (YDLGQVVKSE…AQEAIAHEWI (261 aa)) enclose the Protein kinase domain. The segment at 326 to 421 (ASEQGDTGAS…PQMLPQRKGY (96 aa)) is disordered. Low complexity-rich tracts occupy residues 330–340 (GDTGASGLAAG) and 390–406 (QQQA…QQAR).

This sequence belongs to the protein kinase superfamily. CAMK Ser/Thr protein kinase family. In terms of assembly, interacts with calmodulin, in the presence of calcium. Requires Ca(2+) as cofactor. In terms of tissue distribution, ubiquitously expressed.

The protein localises to the cytoplasmic vesicle membrane. In terms of biological role, does not appear to have detectable kinase activity. The sequence is that of CaM kinase-like vesicle-associated protein (camkv) from Takifugu rubripes (Japanese pufferfish).